Consider the following 191-residue polypeptide: 3-hydroxyanthranilate 3,4-dioxygenase 2 (191 aa).

Residue Arg48 coordinates O2. His52, Glu73, and His111 together coordinate Fe cation. Residue Glu73 coordinates substrate. Residues Arg115 and Glu125 each coordinate substrate.

The protein belongs to the 3-HAO family. It depends on Fe(2+) as a cofactor.

Its subcellular location is the cytoplasm. The catalysed reaction is 3-hydroxyanthranilate + O2 = (2Z,4Z)-2-amino-3-carboxymuconate 6-semialdehyde. It participates in cofactor biosynthesis; NAD(+) biosynthesis; quinolinate from L-kynurenine: step 3/3. Its function is as follows. Catalyzes the oxidative ring opening of 3-hydroxyanthranilate to 2-amino-3-carboxymuconate semialdehyde, which spontaneously cyclizes to quinolinate. This chain is 3-hydroxyanthranilate 3,4-dioxygenase 2 (bna1-2), found in Aspergillus clavatus (strain ATCC 1007 / CBS 513.65 / DSM 816 / NCTC 3887 / NRRL 1 / QM 1276 / 107).